Reading from the N-terminus, the 64-residue chain is Conotoxin Cal12.4 (64 aa).

A signal peptide spans 1–21 (MKLTCMLVVLLLVLPFGDLIA).

This sequence belongs to the conotoxin O1 superfamily. Post-translationally, contains 4 disulfide bonds. As to expression, expressed by the venom duct.

The protein localises to the secreted. Probable neurotoxin. In Californiconus californicus (California cone), this protein is Conotoxin Cal12.4.